A 278-amino-acid chain; its full sequence is Putative ABC transporter ATP-binding protein MTBMA_c05830 (278 aa).

Positions Ile4–Arg239 constitute an ABC transporter domain. Gly37–Ser44 contributes to the ATP binding site.

It belongs to the ABC transporter superfamily.

It is found in the cell membrane. Functionally, probably part of an ABC transporter complex. Responsible for energy coupling to the transport system. This chain is Putative ABC transporter ATP-binding protein MTBMA_c05830, found in Methanothermobacter marburgensis (strain ATCC BAA-927 / DSM 2133 / JCM 14651 / NBRC 100331 / OCM 82 / Marburg) (Methanobacterium thermoautotrophicum).